A 178-amino-acid chain; its full sequence is Protein PilI (178 aa).

One can recognise a CheW-like domain in the interval 34-173 (SWSGIGFRMG…PHALAQHQGF (140 aa)).

Functionally, may be a part of a signal-transduction system that regulates twitching motility by controlling pilus function (extension and retraction). The polypeptide is Protein PilI (pilI) (Pseudomonas aeruginosa (strain ATCC 15692 / DSM 22644 / CIP 104116 / JCM 14847 / LMG 12228 / 1C / PRS 101 / PAO1)).